The following is a 364-amino-acid chain: tRNA 2-selenouridine synthase (364 aa).

The 124-residue stretch at 14-137 (LLADTPLIDV…LRQTAIQATW (124 aa)) folds into the Rhodanese domain. Cys-97 acts as the S-selanylcysteine intermediate in catalysis.

The protein belongs to the SelU family. In terms of assembly, monomer.

The catalysed reaction is 5-methylaminomethyl-2-thiouridine(34) in tRNA + selenophosphate + (2E)-geranyl diphosphate + H2O + H(+) = 5-methylaminomethyl-2-selenouridine(34) in tRNA + (2E)-thiogeraniol + phosphate + diphosphate. The enzyme catalyses 5-methylaminomethyl-2-thiouridine(34) in tRNA + (2E)-geranyl diphosphate = 5-methylaminomethyl-S-(2E)-geranyl-thiouridine(34) in tRNA + diphosphate. It catalyses the reaction 5-methylaminomethyl-S-(2E)-geranyl-thiouridine(34) in tRNA + selenophosphate + H(+) = 5-methylaminomethyl-2-(Se-phospho)selenouridine(34) in tRNA + (2E)-thiogeraniol. It carries out the reaction 5-methylaminomethyl-2-(Se-phospho)selenouridine(34) in tRNA + H2O = 5-methylaminomethyl-2-selenouridine(34) in tRNA + phosphate. In terms of biological role, involved in the post-transcriptional modification of the uridine at the wobble position (U34) of tRNA(Lys), tRNA(Glu) and tRNA(Gln). Catalyzes the conversion of 2-thiouridine (S2U-RNA) to 2-selenouridine (Se2U-RNA). Acts in a two-step process involving geranylation of 2-thiouridine (S2U) to S-geranyl-2-thiouridine (geS2U) and subsequent selenation of the latter derivative to 2-selenouridine (Se2U) in the tRNA chain. This chain is tRNA 2-selenouridine synthase, found in Salmonella paratyphi A (strain ATCC 9150 / SARB42).